The sequence spans 333 residues: Syntaxin-4 (333 aa).

The Cytoplasmic portion of the chain corresponds to 1 to 312; that stretch reads MGKDRLPELL…QHQKKARKKK (312 aa). Residues 50–66 are compositionally biased toward low complexity; the sequence is YSVVSQNSHSCSNNNSS. The disordered stretch occupies residues 50-81; sequence YSVVSQNSHSCSNNNSSTEPKDRSSSKMTQYG. The stretch at 91–116 forms a coiled coil; the sequence is YTEIRQQLAQIAANLETMNRMAQTVN. The region spanning 239 to 301 is the t-SNARE coiled-coil homology domain; it reads LREMMDRFNE…DKGADELDQA (63 aa). A helical; Anchor for type IV membrane protein membrane pass occupies residues 313-333; it reads IMLIVILAAVLLVLLLVGIYL.

It belongs to the syntaxin family.

It localises to the membrane. Potentially involved in docking of synaptic vesicles at presynaptic active zones. This Drosophila melanogaster (Fruit fly) protein is Syntaxin-4.